A 409-amino-acid chain; its full sequence is Lipoyl synthase, mitochondrial (409 aa).

Residues 21-41 (QQQVPPSEEPRNESGAANPPL) form a disordered region. [4Fe-4S] cluster contacts are provided by C125, C130, C136, C159, C163, C166, and S375. One can recognise a Radical SAM core domain in the interval 142–364 (EEGDGTATAT…EKEALDMGFL (223 aa)).

Belongs to the radical SAM superfamily. Lipoyl synthase family. [4Fe-4S] cluster is required as a cofactor.

It localises to the mitochondrion. The catalysed reaction is [[Fe-S] cluster scaffold protein carrying a second [4Fe-4S](2+) cluster] + N(6)-octanoyl-L-lysyl-[protein] + 2 oxidized [2Fe-2S]-[ferredoxin] + 2 S-adenosyl-L-methionine + 4 H(+) = [[Fe-S] cluster scaffold protein] + N(6)-[(R)-dihydrolipoyl]-L-lysyl-[protein] + 4 Fe(3+) + 2 hydrogen sulfide + 2 5'-deoxyadenosine + 2 L-methionine + 2 reduced [2Fe-2S]-[ferredoxin]. Its pathway is protein modification; protein lipoylation via endogenous pathway; protein N(6)-(lipoyl)lysine from octanoyl-[acyl-carrier-protein]: step 2/2. In terms of biological role, catalyzes the radical-mediated insertion of two sulfur atoms into the C-6 and C-8 positions of the octanoyl moiety bound to the lipoyl domains of lipoate-dependent enzymes, thereby converting the octanoylated domains into lipoylated derivatives. This Trypanosoma brucei gambiense (strain MHOM/CI/86/DAL972) protein is Lipoyl synthase, mitochondrial.